Here is a 587-residue protein sequence, read N- to C-terminus: UDP-N-acetylmuramoylalanine--D-glutamate ligase (587 aa).

The interval Asp124–Asp147 is disordered. Low complexity predominate over residues Pro132 to Asp147. Gly214–Thr220 contacts ATP.

Belongs to the MurCDEF family.

It is found in the cytoplasm. The catalysed reaction is UDP-N-acetyl-alpha-D-muramoyl-L-alanine + D-glutamate + ATP = UDP-N-acetyl-alpha-D-muramoyl-L-alanyl-D-glutamate + ADP + phosphate + H(+). Its pathway is cell wall biogenesis; peptidoglycan biosynthesis. Functionally, cell wall formation. Catalyzes the addition of glutamate to the nucleotide precursor UDP-N-acetylmuramoyl-L-alanine (UMA). The chain is UDP-N-acetylmuramoylalanine--D-glutamate ligase from Polaromonas sp. (strain JS666 / ATCC BAA-500).